The sequence spans 403 residues: Leu/Ile/Val-binding protein homolog 8 (403 aa).

The signal sequence occupies residues 1-26 (MRLSRLLIGASLGVALSSTVFTAALA).

This sequence belongs to the leucine-binding protein family.

In terms of biological role, component of an amino-acid transport system. This chain is Leu/Ile/Val-binding protein homolog 8, found in Brucella abortus (strain 2308).